Reading from the N-terminus, the 113-residue chain is Integration host factor subunit alpha (113 aa).

The segment at 87 to 113 is disordered; it reads NALNGEVSDETTEGADDDDDEEGEGDE. Acidic residues predominate over residues 93–113; that stretch reads VSDETTEGADDDDDEEGEGDE.

Belongs to the bacterial histone-like protein family. Heterodimer of an alpha and a beta chain.

Its function is as follows. This protein is one of the two subunits of integration host factor, a specific DNA-binding protein that functions in genetic recombination as well as in transcriptional and translational control. This is Integration host factor subunit alpha from Anaeromyxobacter dehalogenans (strain 2CP-1 / ATCC BAA-258).